We begin with the raw amino-acid sequence, 648 residues long: Actin-related protein 5 (648 aa).

A disordered region spans residues 34–59; the sequence is LTKPRKDRKKEAAASEGSASQTTVEQ. 2 coiled-coil regions span residues 277 to 311 and 340 to 364; these read TAEQKQEKRRELAHRLLDIKKNREQEKLREDEQQL and TLEDLDSLIATINSRIKRAQERAQS. 2 disordered regions span residues 357–385 and 403–455; these read RAQERAQSGPRPSKQQERLNKMPKPPEGM and GRKQ…GMND. Residues 414–428 show a composition bias toward basic and acidic residues; sequence EQAKRHTHAAQERMR. Residues serine 471 and serine 473 each carry the phosphoserine modification.

Belongs to the actin family. ARP5 subfamily. In terms of assembly, component of the chromatin remodeling Ino80 complex.

It is found in the nucleus. Functionally, proposed core component of the chromatin remodeling Ino80 complex which is involved in transcriptional regulation, DNA replication and probably DNA repair. The protein is Actin-related protein 5 of Drosophila melanogaster (Fruit fly).